Reading from the N-terminus, the 253-residue chain is Negative modulator of initiation of replication (253 aa).

Positions 66 to 112 (SNQEQQTGHGHAGEPSAVQTPESNDYAKAQPHSSGYQPGQLEGHKSE) are disordered. Residues 154–155 (AV) form an interaction with DNA region.

It belongs to the SeqA family. Homodimer. Polymerizes to form helical filaments.

It is found in the cytoplasm. Negative regulator of replication initiation, which contributes to regulation of DNA replication and ensures that replication initiation occurs exactly once per chromosome per cell cycle. Binds to pairs of hemimethylated GATC sequences in the oriC region, thus preventing assembly of replication proteins and re-initiation at newly replicated origins. Repression is relieved when the region becomes fully methylated. This chain is Negative modulator of initiation of replication, found in Shewanella denitrificans (strain OS217 / ATCC BAA-1090 / DSM 15013).